Here is a 148-residue protein sequence, read N- to C-terminus: SsrA-binding protein (148 aa).

Residues 129–142 (ETEKKRDWEREKAR) are compositionally biased toward basic and acidic residues. The disordered stretch occupies residues 129–148 (ETEKKRDWEREKARIMRAGT).

Belongs to the SmpB family.

It is found in the cytoplasm. Functionally, required for rescue of stalled ribosomes mediated by trans-translation. Binds to transfer-messenger RNA (tmRNA), required for stable association of tmRNA with ribosomes. tmRNA and SmpB together mimic tRNA shape, replacing the anticodon stem-loop with SmpB. tmRNA is encoded by the ssrA gene; the 2 termini fold to resemble tRNA(Ala) and it encodes a 'tag peptide', a short internal open reading frame. During trans-translation Ala-aminoacylated tmRNA acts like a tRNA, entering the A-site of stalled ribosomes, displacing the stalled mRNA. The ribosome then switches to translate the ORF on the tmRNA; the nascent peptide is terminated with the 'tag peptide' encoded by the tmRNA and targeted for degradation. The ribosome is freed to recommence translation, which seems to be the essential function of trans-translation. The chain is SsrA-binding protein from Burkholderia orbicola (strain AU 1054).